Consider the following 250-residue polypeptide: Adenosylcobinamide-GDP ribazoletransferase (250 aa).

Transmembrane regions (helical) follow at residues 31–51, 55–75, 106–126, 133–153, 187–207, and 230–250; these read ISYLPLVGLIIGGFNAIVYFV, FILGTLPIVLALLANTIITGA, VGTNGAIAIVFDFMLRYAVLN, IIIALILSPVVAKTVVTLLMC, IGYVLIGYKYVALLLITVLFI, and NEIAEIIFMLALLSFKGCGLL.

This sequence belongs to the CobS family. Requires Mg(2+) as cofactor.

Its subcellular location is the cell membrane. The catalysed reaction is alpha-ribazole + adenosylcob(III)inamide-GDP = adenosylcob(III)alamin + GMP + H(+). It catalyses the reaction alpha-ribazole 5'-phosphate + adenosylcob(III)inamide-GDP = adenosylcob(III)alamin 5'-phosphate + GMP + H(+). Its pathway is cofactor biosynthesis; adenosylcobalamin biosynthesis; adenosylcobalamin from cob(II)yrinate a,c-diamide: step 7/7. Its function is as follows. Joins adenosylcobinamide-GDP and alpha-ribazole to generate adenosylcobalamin (Ado-cobalamin). Also synthesizes adenosylcobalamin 5'-phosphate from adenosylcobinamide-GDP and alpha-ribazole 5'-phosphate. The protein is Adenosylcobinamide-GDP ribazoletransferase of Clostridium novyi (strain NT).